The following is a 492-amino-acid chain: Transmembrane protein 39B (492 aa).

The segment at 1-53 (MGGRRGPNRTSYYRNPLCEPGSSGASGGGHSSSASVSSVRSRSRTTSGTGLSS) is disordered. A glycan (N-linked (GlcNAc...) asparagine) is linked at N8. Residues 31–53 (SSSASVSSVRSRSRTTSGTGLSS) are compositionally biased toward low complexity. 8 consecutive transmembrane segments (helical) span residues 77–97 (SILF…VHYI), 115–135 (TSLN…IVLG), 153–175 (SLFR…GWSL), 185–205 (TYSF…IPFL), 288–308 (EVLV…VWFV), 322–342 (LFLL…LPAS), 421–441 (ILNI…YSLM), and 447–467 (HQTI…FKLL).

This sequence belongs to the TMEM39 family.

It is found in the endoplasmic reticulum membrane. May protect the cells against DNA damage caused by exposure to the cold-warming stress and facilitates tissue damage repair during the recovery phase. This Rattus norvegicus (Rat) protein is Transmembrane protein 39B.